The chain runs to 129 residues: Small ribosomal subunit protein uS11 (129 aa).

The protein belongs to the universal ribosomal protein uS11 family. In terms of assembly, part of the 30S ribosomal subunit. Interacts with proteins S7 and S18. Binds to IF-3.

Located on the platform of the 30S subunit, it bridges several disparate RNA helices of the 16S rRNA. Forms part of the Shine-Dalgarno cleft in the 70S ribosome. This chain is Small ribosomal subunit protein uS11, found in Psychromonas ingrahamii (strain DSM 17664 / CCUG 51855 / 37).